Consider the following 100-residue polypeptide: Urease subunit gamma (100 aa).

The protein belongs to the urease gamma subunit family. As to quaternary structure, heterotrimer of UreA (gamma), UreB (beta) and UreC (alpha) subunits. Three heterotrimers associate to form the active enzyme.

It is found in the cytoplasm. The catalysed reaction is urea + 2 H2O + H(+) = hydrogencarbonate + 2 NH4(+). Its pathway is nitrogen metabolism; urea degradation; CO(2) and NH(3) from urea (urease route): step 1/1. The chain is Urease subunit gamma from Frankia alni (strain DSM 45986 / CECT 9034 / ACN14a).